A 181-amino-acid polypeptide reads, in one-letter code: ATP synthase subunit delta (181 aa).

Belongs to the ATPase delta chain family. As to quaternary structure, F-type ATPases have 2 components, F(1) - the catalytic core - and F(0) - the membrane proton channel. F(1) has five subunits: alpha(3), beta(3), gamma(1), delta(1), epsilon(1). F(0) has three main subunits: a(1), b(2) and c(10-14). The alpha and beta chains form an alternating ring which encloses part of the gamma chain. F(1) is attached to F(0) by a central stalk formed by the gamma and epsilon chains, while a peripheral stalk is formed by the delta and b chains.

Its subcellular location is the cell inner membrane. Its function is as follows. F(1)F(0) ATP synthase produces ATP from ADP in the presence of a proton or sodium gradient. F-type ATPases consist of two structural domains, F(1) containing the extramembraneous catalytic core and F(0) containing the membrane proton channel, linked together by a central stalk and a peripheral stalk. During catalysis, ATP synthesis in the catalytic domain of F(1) is coupled via a rotary mechanism of the central stalk subunits to proton translocation. Functionally, this protein is part of the stalk that links CF(0) to CF(1). It either transmits conformational changes from CF(0) to CF(1) or is implicated in proton conduction. This is ATP synthase subunit delta from Hyphomonas neptunium (strain ATCC 15444).